The chain runs to 135 residues: DNA-binding protein inhibitor ID-2-B (135 aa).

Residues 23–75 (ARSKAPVDEPMSLLYNMNDCYSKLKELVPSIPPNKKVSKMEILQHVIDYILDL) enclose the bHLH domain. The short motif at 108-117 (LNTDISILSL) is the Nuclear export signal element.

As to quaternary structure, heterodimer with other HLH proteins.

The protein resides in the cytoplasm. Its subcellular location is the nucleus. Transcriptional regulator (lacking a basic DNA binding domain) which negatively regulates the basic helix-loop-helix (bHLH) transcription factors by forming heterodimers and inhibiting their DNA binding and transcriptional activity. Inhibits the activity of both neurogenic (neurod1/neuroD) and myogenic (myod1/myoD) bHLH factors. May play a role in the regulation of the circadian clock. In Xenopus laevis (African clawed frog), this protein is DNA-binding protein inhibitor ID-2-B (id2-b).